A 623-amino-acid polypeptide reads, in one-letter code: V-type proton ATPase catalytic subunit A (623 aa).

G252–T259 serves as a coordination point for ATP.

This sequence belongs to the ATPase alpha/beta chains family. V-ATPase is a heteromultimeric enzyme composed of a peripheral catalytic V1 complex (main components: subunits A, B, C, D, E, and F) attached to an integral membrane V0 proton pore complex (main component: the proteolipid protein).

The catalysed reaction is ATP + H2O + 4 H(+)(in) = ADP + phosphate + 5 H(+)(out). Functionally, catalytic subunit of the peripheral V1 complex of vacuolar ATPase. V-ATPase vacuolar ATPase is responsible for acidifying a variety of intracellular compartments in eukaryotic cells. This is V-type proton ATPase catalytic subunit A (CVA69.24) from Gossypium hirsutum (Upland cotton).